The chain runs to 175 residues: SsrA-binding protein (175 aa).

2 disordered regions span residues 1–29 (MTRN…ERDA) and 152–175 (KRET…SRKS).

The protein belongs to the SmpB family.

The protein localises to the cytoplasm. In terms of biological role, required for rescue of stalled ribosomes mediated by trans-translation. Binds to transfer-messenger RNA (tmRNA), required for stable association of tmRNA with ribosomes. tmRNA and SmpB together mimic tRNA shape, replacing the anticodon stem-loop with SmpB. tmRNA is encoded by the ssrA gene; the 2 termini fold to resemble tRNA(Ala) and it encodes a 'tag peptide', a short internal open reading frame. During trans-translation Ala-aminoacylated tmRNA acts like a tRNA, entering the A-site of stalled ribosomes, displacing the stalled mRNA. The ribosome then switches to translate the ORF on the tmRNA; the nascent peptide is terminated with the 'tag peptide' encoded by the tmRNA and targeted for degradation. The ribosome is freed to recommence translation, which seems to be the essential function of trans-translation. This chain is SsrA-binding protein, found in Koribacter versatilis (strain Ellin345).